Reading from the N-terminus, the 932-residue chain is Serotype-specific antigen 1 (932 aa).

An N-terminal signal peptide occupies residues 1–24 (MYKIKHSFNKTLIAISISSFLSIA). Positions 25 to 407 (YATESIENPQ…WGLINLKKAV (383 aa)) constitute a Peptidase S8 domain. Residues Asp-58, His-116, and Ser-351 each act as charge relay system in the active site. Residues 669–932 (HTPLQTTVWA…PIWLESKCWL (264 aa)) form the Autotransporter domain.

The protein belongs to the peptidase S8 family.

The protein resides in the cell outer membrane. In Mannheimia haemolytica (Pasteurella haemolytica), this protein is Serotype-specific antigen 1 (ssa1).